The following is a 130-amino-acid chain: MPKQAIIPAGTTTPIAPFVPGTMADGIVYVSGTLPFDKDNNVVHVGDASAQTRHVLETIQNVIATAGGTMDDVTFNMIMIKDWADYAKVNAVYAEFFPGTKPARYCIQCGLVKPDALVEIASIAHVGNKA.

It belongs to the RutC family.

The enzyme catalyses (Z)-3-aminoacrylate + H2O + H(+) = 3-oxopropanoate + NH4(+). In terms of biological role, involved in pyrimidine catabolism. Catalyzes the deamination of 3-aminoacrylate to malonic semialdehyde, a reaction that can also occur spontaneously. RutC may facilitate the reaction and modulate the metabolic fitness, rather than catalyzing essential functions. The polypeptide is 3-aminoacrylate deaminase RutC (Variovorax paradoxus (strain S110)).